We begin with the raw amino-acid sequence, 92 residues long: Protein OP-ORF (92 aa).

The stretch at 53–82 forms a coiled coil; the sequence is KMLAATISILEEEVTELVTELNNTTNLTAK.

The sequence is that of Protein OP-ORF from Rice dwarf virus (isolate Fujian) (RDV).